Reading from the N-terminus, the 435-residue chain is Putative GMP synthase [glutamine-hydrolyzing] 2 (435 aa).

Residues 1-120 (MKQDMIVILD…VFDTCQAEAN (120 aa)) form the Glutamine amidotransferase type-1; truncated domain. A GMPS ATP-PPase domain is found at 121-310 (WNMANFVNDQ…LGLPYEMVYR (190 aa)). Residue 148–154 (SGGVDSS) coordinates ATP.

In terms of assembly, homodimer.

The catalysed reaction is XMP + L-glutamine + ATP + H2O = GMP + L-glutamate + AMP + diphosphate + 2 H(+). It participates in purine metabolism; GMP biosynthesis; GMP from XMP (L-Gln route): step 1/1. Catalyzes the synthesis of GMP from XMP. This chain is Putative GMP synthase [glutamine-hydrolyzing] 2 (guaA2), found in Bacteroides thetaiotaomicron (strain ATCC 29148 / DSM 2079 / JCM 5827 / CCUG 10774 / NCTC 10582 / VPI-5482 / E50).